We begin with the raw amino-acid sequence, 358 residues long: Uroporphyrinogen decarboxylase (358 aa).

Residues Arg36–Arg40, Asp85, Tyr160, Ser215, and His338 each bind substrate.

Belongs to the uroporphyrinogen decarboxylase family. Homodimer.

The protein localises to the cytoplasm. The enzyme catalyses uroporphyrinogen III + 4 H(+) = coproporphyrinogen III + 4 CO2. It functions in the pathway porphyrin-containing compound metabolism; protoporphyrin-IX biosynthesis; coproporphyrinogen-III from 5-aminolevulinate: step 4/4. Catalyzes the decarboxylation of four acetate groups of uroporphyrinogen-III to yield coproporphyrinogen-III. This Corynebacterium glutamicum (strain ATCC 13032 / DSM 20300 / JCM 1318 / BCRC 11384 / CCUG 27702 / LMG 3730 / NBRC 12168 / NCIMB 10025 / NRRL B-2784 / 534) protein is Uroporphyrinogen decarboxylase.